We begin with the raw amino-acid sequence, 187 residues long: UPF0340 protein SMU_87 (187 aa).

This sequence belongs to the UPF0340 family.

This is UPF0340 protein SMU_87 from Streptococcus mutans serotype c (strain ATCC 700610 / UA159).